The primary structure comprises 571 residues: Double-stranded RNA-binding protein Staufen homolog 2 (571 aa).

In terms of domain architecture, DRBM 1 spans 8–75 (TPMCLVNELA…ANKALTESTL (68 aa)). A phosphoserine mark is found at Pro-9 and Val-13. Arg-18 is modified (phosphothreonine). Ser-21 carries the phosphoserine modification. Disordered regions lie at residues 71-94 (TEST…PGSI) and 178-203 (ALQN…DDKD). Polar residues predominate over residues 83 to 94 (PKSNVNNNPGSI). Residues 95–181 (TPTVELNGLA…AMKALQALQN (87 aa)) enclose the DRBM 2 domain. Ser-188 carries the post-translational modification Phosphoserine. Basic and acidic residues predominate over residues 194 to 203 (SGKEMDDDKD). 2 DRBM domains span residues 207–274 (SEIS…ELKK) and 307–375 (NPIS…QLGY). Short sequence motifs (nuclear localization signal) lie at residues 273–317 (KKLP…QIQQ) and 373–412 (LGYK…PKGI). A required for dendritic transport region spans residues 381–571 (LQDQLDKTGE…QDCKKSKSVI (191 aa)). Residues 382–413 (QDQLDKTGENKGWSGPKPGFPEPANNTPKGIL) form a disordered region. A phosphoserine mark is found at Ser-395, Ser-416, Ser-426, Ser-440, Ser-456, and Ser-493. The tract at residues 546–571 (LREKADNNQANPGSITQDCKKSKSVI) is disordered. The span at 552 to 562 (NNQANPGSITQ) shows a compositional bias: polar residues.

As to quaternary structure, identified in a mRNP complex, at least composed of DHX9, DDX3X, ELAVL1, HNRNPU, IGF2BP1, ILF3, PABPC1, PCBP2, PTBP2, STAU1, STAU2, SYNCRIP and YBX1. Interacts with the exportin XPO5. This requires RNA and RAN bound to GTP. Interacts with microtubules. Isoform 2 and isoform 3 may also interact with ribosomes, and this association is independent of translation. Interacts with TRIM71 (via NHL repeats) in an RNA-dependent manner. Expressed in both somata and dendrites of hippocampal neurons.

It localises to the nucleus. The protein resides in the nucleolus. The protein localises to the cytoplasm. It is found in the endoplasmic reticulum. Its function is as follows. RNA-binding protein required for the microtubule-dependent transport of neuronal RNA from the cell body to the dendrite. As protein synthesis occurs within the dendrite, the localization of specific mRNAs to dendrites may be a prerequisite for neurite outgrowth and plasticity at sites distant from the cell body. The sequence is that of Double-stranded RNA-binding protein Staufen homolog 2 (Stau2) from Rattus norvegicus (Rat).